Here is a 78-residue protein sequence, read N- to C-terminus: uncharacterized protein (78 aa).

A disordered region spans residues 1–28 (MQANHSVSYLYESSTSKRSNGLFSQTQK).

This is an uncharacterized protein from Saccharomyces cerevisiae (strain ATCC 204508 / S288c) (Baker's yeast).